The chain runs to 299 residues: tRNA dimethylallyltransferase (299 aa).

13 to 20 (GPTASGKT) lines the ATP pocket. Residue 15–20 (TASGKT) participates in substrate binding. The interaction with substrate tRNA stretch occupies residues 38–41 (DSRQ).

It belongs to the IPP transferase family. In terms of assembly, monomer. Requires Mg(2+) as cofactor.

The enzyme catalyses adenosine(37) in tRNA + dimethylallyl diphosphate = N(6)-dimethylallyladenosine(37) in tRNA + diphosphate. In terms of biological role, catalyzes the transfer of a dimethylallyl group onto the adenine at position 37 in tRNAs that read codons beginning with uridine, leading to the formation of N6-(dimethylallyl)adenosine (i(6)A). This is tRNA dimethylallyltransferase from Prochlorococcus marinus (strain MIT 9313).